A 103-amino-acid chain; its full sequence is MSQYDNVSVVKKANVYFDGKCVSHTVVLADGTKKTVGVILPSSLTFNTGAPEIMEGVGGSCRVKLKGESEWKTYGDGQSFNVPGNSSFEIACDEPYHYVCHFG.

This sequence belongs to the nucleoside phosphorylase PpnP family.

The enzyme catalyses a purine D-ribonucleoside + phosphate = a purine nucleobase + alpha-D-ribose 1-phosphate. The catalysed reaction is adenosine + phosphate = alpha-D-ribose 1-phosphate + adenine. It catalyses the reaction cytidine + phosphate = cytosine + alpha-D-ribose 1-phosphate. It carries out the reaction guanosine + phosphate = alpha-D-ribose 1-phosphate + guanine. The enzyme catalyses inosine + phosphate = alpha-D-ribose 1-phosphate + hypoxanthine. The catalysed reaction is thymidine + phosphate = 2-deoxy-alpha-D-ribose 1-phosphate + thymine. It catalyses the reaction uridine + phosphate = alpha-D-ribose 1-phosphate + uracil. It carries out the reaction xanthosine + phosphate = alpha-D-ribose 1-phosphate + xanthine. Catalyzes the phosphorolysis of diverse nucleosides, yielding D-ribose 1-phosphate and the respective free bases. Can use uridine, adenosine, guanosine, cytidine, thymidine, inosine and xanthosine as substrates. Also catalyzes the reverse reactions. In Dechloromonas aromatica (strain RCB), this protein is Pyrimidine/purine nucleoside phosphorylase.